The following is a 634-amino-acid chain: AAl-toxin cluster-specific transcription factor ALT13 (634 aa).

The zn(2)-C6 fungal-type DNA-binding region spans 30–56; sequence CENCKRRKVRCSGANPCEQCLKVNVHC. The tract at residues 66–89 is disordered; the sequence is RRSVPNSGADKNNQQGDTDRHNGA. Residues 69 to 81 are compositionally biased toward polar residues; the sequence is VPNSGADKNNQQG.

The protein resides in the nucleus. In terms of biological role, transcription factor that regulates the expression of the gene cluster that mediates the biosynthesis of AAL-toxins, sphinganine-analog mycotoxins responsible for Alternaria stem canker on tomato by the tomato pathotype. This is AAl-toxin cluster-specific transcription factor ALT13 from Alternaria alternata (Alternaria rot fungus).